The primary structure comprises 1252 residues: HEAT repeat-containing protein 6 (1252 aa).

An HEAT 1 repeat occupies 230 to 269; the sequence is PDLLGKSGLLMKLSDVTHSDPEVRRAAVHCMANLCLSVPG. The disordered stretch occupies residues 365-417; the sequence is DGRSPVKPQQPESSAARPSANKKKKYKVKPKKTQQGEKAEEEEPYGEVDAAPG. A compositionally biased stretch (basic residues) spans 384-396; it reads ANKKKKYKVKPKK. 2 positions are modified to phosphoserine: S471 and S474. HEAT repeat units follow at residues 524–562, 586–624, and 630–667; these read ELGS…GSKQ, SSIR…NAPY, and SLLT…THAP. At T689 the chain carries Phosphothreonine. The residue at position 714 (S714) is a Phosphoserine.

The sequence is that of HEAT repeat-containing protein 6 (Heatr6) from Rattus norvegicus (Rat).